The chain runs to 217 residues: Protein-methionine-sulfoxide reductase heme-binding subunit MsrQ (217 aa).

Helical transmembrane passes span 82-102 (MLGLYTFFYGTLHFLIWLLVD), 118-138 (PFITVGFAAFVLMIPLAATST), 150-170 (WQWLHRLVYVTGVLGILHYWW), and 180-200 (EVSIYAAVMAVLLGLRVWWVW).

It belongs to the MsrQ family. As to quaternary structure, heterodimer of a catalytic subunit (MsrP) and a heme-binding subunit (MsrQ). Requires FMN as cofactor. Heme b is required as a cofactor.

The protein resides in the cell inner membrane. Its function is as follows. Part of the MsrPQ system that repairs oxidized periplasmic proteins containing methionine sulfoxide residues (Met-O), using respiratory chain electrons. Thus protects these proteins from oxidative-stress damage caused by reactive species of oxygen and chlorine generated by the host defense mechanisms. MsrPQ is essential for the maintenance of envelope integrity under bleach stress, rescuing a wide series of structurally unrelated periplasmic proteins from methionine oxidation. MsrQ provides electrons for reduction to the reductase catalytic subunit MsrP, using the quinone pool of the respiratory chain. In Ralstonia nicotianae (strain ATCC BAA-1114 / GMI1000) (Ralstonia solanacearum), this protein is Protein-methionine-sulfoxide reductase heme-binding subunit MsrQ.